Consider the following 473-residue polypeptide: Argininosuccinate lyase (473 aa).

Belongs to the lyase 1 family. Argininosuccinate lyase subfamily.

The protein resides in the cytoplasm. The catalysed reaction is 2-(N(omega)-L-arginino)succinate = fumarate + L-arginine. It participates in amino-acid biosynthesis; L-arginine biosynthesis; L-arginine from L-ornithine and carbamoyl phosphate: step 3/3. The protein is Argininosuccinate lyase of Nocardia farcinica (strain IFM 10152).